We begin with the raw amino-acid sequence, 167 residues long: MGLGDYSHCRQRMSRGLYGVSGRAALWSPVFHPVHRMPCGTWRIGIEVPEHVRASSPVLEHLRRQLERAFQRAAARGRARRAREAVAAVAAAAAAAREERSRTRMECALARLRAELLELRFQNHQLARTLLDLNMKMQQLKKRQDQELASKPQSPQDKEMNSECGSA.

The tract at residues 140–167 is disordered; sequence LKKRQDQELASKPQSPQDKEMNSECGSA.

As to expression, preferentially expressed in testis both in embryo and adult. Expressed at much lower level in other tissues.

In Mus musculus (Mouse), this protein is Alanine- and arginine-rich domain-containing protein (Aard).